The primary structure comprises 278 residues: Putative phosphoenolpyruvate synthase regulatory protein (278 aa).

Residue 158–165 (GVSRSGKT) participates in ADP binding.

This sequence belongs to the pyruvate, phosphate/water dikinase regulatory protein family. PSRP subfamily.

It catalyses the reaction [pyruvate, water dikinase] + ADP = [pyruvate, water dikinase]-phosphate + AMP + H(+). The enzyme catalyses [pyruvate, water dikinase]-phosphate + phosphate + H(+) = [pyruvate, water dikinase] + diphosphate. Its function is as follows. Bifunctional serine/threonine kinase and phosphorylase involved in the regulation of the phosphoenolpyruvate synthase (PEPS) by catalyzing its phosphorylation/dephosphorylation. The protein is Putative phosphoenolpyruvate synthase regulatory protein of Acinetobacter baylyi (strain ATCC 33305 / BD413 / ADP1).